We begin with the raw amino-acid sequence, 243 residues long: 3-deoxy-manno-octulosonate cytidylyltransferase (243 aa).

Belongs to the KdsB family.

The protein localises to the cytoplasm. The catalysed reaction is 3-deoxy-alpha-D-manno-oct-2-ulosonate + CTP = CMP-3-deoxy-beta-D-manno-octulosonate + diphosphate. It participates in nucleotide-sugar biosynthesis; CMP-3-deoxy-D-manno-octulosonate biosynthesis; CMP-3-deoxy-D-manno-octulosonate from 3-deoxy-D-manno-octulosonate and CTP: step 1/1. The protein operates within bacterial outer membrane biogenesis; lipopolysaccharide biosynthesis. Functionally, activates KDO (a required 8-carbon sugar) for incorporation into bacterial lipopolysaccharide in Gram-negative bacteria. The polypeptide is 3-deoxy-manno-octulosonate cytidylyltransferase (Helicobacter pylori (strain J99 / ATCC 700824) (Campylobacter pylori J99)).